The chain runs to 1213 residues: DNA-directed RNA polymerase subunit beta' (1213 aa).

Residues cysteine 60, cysteine 62, cysteine 75, and cysteine 78 each coordinate Zn(2+). The Mg(2+) site is built by aspartate 449, aspartate 451, and aspartate 453. Zn(2+)-binding residues include cysteine 818, cysteine 892, cysteine 899, and cysteine 902.

This sequence belongs to the RNA polymerase beta' chain family. In terms of assembly, the RNAP catalytic core consists of 2 alpha, 1 beta, 1 beta' and 1 omega subunit. When a sigma factor is associated with the core the holoenzyme is formed, which can initiate transcription. Mg(2+) serves as cofactor. Zn(2+) is required as a cofactor.

It catalyses the reaction RNA(n) + a ribonucleoside 5'-triphosphate = RNA(n+1) + diphosphate. Its function is as follows. DNA-dependent RNA polymerase catalyzes the transcription of DNA into RNA using the four ribonucleoside triphosphates as substrates. The chain is DNA-directed RNA polymerase subunit beta' from Lactiplantibacillus plantarum (strain ATCC BAA-793 / NCIMB 8826 / WCFS1) (Lactobacillus plantarum).